The following is a 93-amino-acid chain: Integration host factor subunit beta (93 aa).

Belongs to the bacterial histone-like protein family. As to quaternary structure, heterodimer of an alpha and a beta chain.

This protein is one of the two subunits of integration host factor, a specific DNA-binding protein that functions in genetic recombination as well as in transcriptional and translational control. This chain is Integration host factor subunit beta (ihfB), found in Cereibacter sphaeroides (strain ATCC 17023 / DSM 158 / JCM 6121 / CCUG 31486 / LMG 2827 / NBRC 12203 / NCIMB 8253 / ATH 2.4.1.) (Rhodobacter sphaeroides).